A 490-amino-acid polypeptide reads, in one-letter code: Acetyl-coenzyme A carboxylase carboxyl transferase subunit beta, chloroplastic (490 aa).

The disordered stretch occupies residues 184-203 (LNSSENEGSSRRTRTKGSDL). Residues 221–490 (LWVQCENCYG…PLNQKSSKIK (270 aa)) enclose the CoA carboxyltransferase N-terminal domain. Zn(2+)-binding residues include Cys225, Cys228, Cys244, and Cys247. The C4-type zinc finger occupies 225–247 (CENCYGLNYKKFLKSKMNICEQC).

The protein belongs to the AccD/PCCB family. In terms of assembly, acetyl-CoA carboxylase is a heterohexamer composed of biotin carboxyl carrier protein, biotin carboxylase and 2 subunits each of ACCase subunit alpha and ACCase plastid-coded subunit beta (accD). It depends on Zn(2+) as a cofactor. In terms of tissue distribution, RNA expressed in leaf, root, stem, and tuber; the least expression occurs in stems. RNA persists even in senescent leaves.

The protein localises to the plastid. It localises to the chloroplast stroma. It carries out the reaction N(6)-carboxybiotinyl-L-lysyl-[protein] + acetyl-CoA = N(6)-biotinyl-L-lysyl-[protein] + malonyl-CoA. It participates in lipid metabolism; malonyl-CoA biosynthesis; malonyl-CoA from acetyl-CoA: step 1/1. Its function is as follows. Component of the acetyl coenzyme A carboxylase (ACC) complex. Biotin carboxylase (BC) catalyzes the carboxylation of biotin on its carrier protein (BCCP) and then the CO(2) group is transferred by the transcarboxylase to acetyl-CoA to form malonyl-CoA. This Solanum tuberosum (Potato) protein is Acetyl-coenzyme A carboxylase carboxyl transferase subunit beta, chloroplastic.